Here is a 938-residue protein sequence, read N- to C-terminus: Chaperone protein ClpD1, chloroplastic (938 aa).

The N-terminal 83 residues, 1–83 (MEVCCCSTSS…FERFTERAVK (83 aa)), are a transit peptide targeting the chloroplast. Repeat regions lie at residues 84–145 (AVVL…TPGA) and 159–224 (FSGS…LQAE). The Clp R domain maps to 84–224 (AVVLSQREAK…SVALTRLQAE (141 aa)). Residues 234–255 (GASSFKVPKKSPAGAGRSAFSK) form a disordered region. Positions 266-519 (LDQFCLDLTT…RMESFNRKKE (254 aa)) are i. Residues 311–318 (GEAGVGKT) and 660–667 (GPTGVGKT) each bind ATP. The II stretch occupies residues 586–777 (VGTEEIARVA…LIVMTSNIGS (192 aa)).

The protein belongs to the ClpA/ClpB family. ClpD subfamily. Expressed in stems, culms and leaves.

The protein localises to the plastid. It localises to the chloroplast. Functionally, molecular chaperone that may function in heat stress response. May interact with a ClpP-like protease involved in degradation of denatured proteins in the chloroplast. Chaperone involved in response to abiotic stresses. Plays a positive role during dehydration and salt stress. In Oryza sativa subsp. japonica (Rice), this protein is Chaperone protein ClpD1, chloroplastic.